The chain runs to 271 residues: Hachiman protein HamA (271 aa).

Component of antiviral defense system Hachiman, composed of HamA and HamB. Expression of Hachiman in B.subtilis (strain BEST7003) confers resistance to phages phi105, phi29, phi3T, rho14, SBSphiJ, SpBeta and SPR. The polypeptide is Hachiman protein HamA (Bacillus cereus).